We begin with the raw amino-acid sequence, 88 residues long: Large ribosomal subunit protein bL27 (88 aa).

Positions 1 to 20 (MASKKGVGSTKDGRDSIAKR) are disordered.

The protein belongs to the bacterial ribosomal protein bL27 family.

This Geobacillus stearothermophilus (Bacillus stearothermophilus) protein is Large ribosomal subunit protein bL27 (rpmA).